We begin with the raw amino-acid sequence, 61 residues long: Protein translocase subunit SecE (61 aa).

At 1–34 (MAELQERIRHFWKESRRAFLVTKKPNWATYKRAA) the chain is on the cytoplasmic side. A helical membrane pass occupies residues 35 to 55 (KITGLGIILIGLIGMLIRIVG). Residues 56-61 (ILILGG) lie on the Extracellular side of the membrane.

The protein belongs to the SecE/SEC61-gamma family. As to quaternary structure, component of the Sec protein translocase complex. Heterotrimer consisting of alpha (SecY), beta (SecG) and gamma (SecE) subunits. The heterotrimers can form oligomers, although 1 heterotrimer is thought to be able to translocate proteins. Interacts with the ribosome. May interact with SecDF, and other proteins may be involved.

It is found in the cell membrane. Functionally, essential subunit of the protein translocation channel SecYEG. Clamps together the 2 halves of SecY. May contact the channel plug during translocation. The protein is Protein translocase subunit SecE of Pyrococcus furiosus (strain ATCC 43587 / DSM 3638 / JCM 8422 / Vc1).